The chain runs to 723 residues: Probable cadmium-transporting ATPase (723 aa).

The 64-residue stretch at 12-75 (EMKAYRVQGF…AGAFENLKVT (64 aa)) folds into the HMA domain. 2 residues coordinate Cd(2+): cysteine 23 and cysteine 26. A run of 5 helical transmembrane segments spans residues 103–123 (STLL…YVNG), 127–147 (IVTT…LFKV), 168–188 (IGGA…LFAI), 329–349 (YYTP…PLFF), and 361–381 (LAVL…ISIV). Aspartate 412 (4-aspartylphosphate intermediate) is an active-site residue. 2 helical membrane-spanning segments follow: residues 671–690 (IIKA…LLLV) and 694–716 (WLTL…LNGL).

It belongs to the cation transport ATPase (P-type) (TC 3.A.3) family. Type IB subfamily.

It localises to the cell membrane. It carries out the reaction Cd(2+)(in) + ATP + H2O = Cd(2+)(out) + ADP + phosphate + H(+). Its function is as follows. Couples the hydrolysis of ATP with the export of cadmium. The polypeptide is Probable cadmium-transporting ATPase (cadA) (Alkalihalophilus pseudofirmus (strain ATCC BAA-2126 / JCM 17055 / OF4) (Bacillus pseudofirmus)).